A 248-amino-acid polypeptide reads, in one-letter code: Phosphoglycerate mutase (248 aa).

Residues 8-15, 21-22, R60, 87-90, K98, 114-115, and 183-184 contribute to the substrate site; these read RHGQSEWN, TG, ERHY, RR, and GN. The Tele-phosphohistidine intermediate role is filled by H9. Catalysis depends on E87, which acts as the Proton donor/acceptor.

This sequence belongs to the phosphoglycerate mutase family. BPG-dependent PGAM subfamily.

Its subcellular location is the cytoplasm. It carries out the reaction (2R)-2-phosphoglycerate = (2R)-3-phosphoglycerate. The protein operates within carbohydrate degradation; glycolysis; pyruvate from D-glyceraldehyde 3-phosphate: step 3/5. The polypeptide is Phosphoglycerate mutase (GPM1) (Candida albicans (strain SC5314 / ATCC MYA-2876) (Yeast)).